The primary structure comprises 190 residues: ATP synthase subunit delta (190 aa).

Belongs to the ATPase delta chain family. In terms of assembly, F-type ATPases have 2 components, F(1) - the catalytic core - and F(0) - the membrane proton channel. F(1) has five subunits: alpha(3), beta(3), gamma(1), delta(1), epsilon(1). F(0) has three main subunits: a(1), b(2) and c(10-14). The alpha and beta chains form an alternating ring which encloses part of the gamma chain. F(1) is attached to F(0) by a central stalk formed by the gamma and epsilon chains, while a peripheral stalk is formed by the delta and b chains.

The protein localises to the cell inner membrane. In terms of biological role, f(1)F(0) ATP synthase produces ATP from ADP in the presence of a proton or sodium gradient. F-type ATPases consist of two structural domains, F(1) containing the extramembraneous catalytic core and F(0) containing the membrane proton channel, linked together by a central stalk and a peripheral stalk. During catalysis, ATP synthesis in the catalytic domain of F(1) is coupled via a rotary mechanism of the central stalk subunits to proton translocation. Functionally, this protein is part of the stalk that links CF(0) to CF(1). It either transmits conformational changes from CF(0) to CF(1) or is implicated in proton conduction. The sequence is that of ATP synthase subunit delta from Methylobacterium sp. (strain 4-46).